A 275-amino-acid chain; its full sequence is tRNA uridine(34) hydroxylase (275 aa).

Positions 121-214 (SQPDVLVIDT…YLEKTYNKNG (94 aa)) constitute a Rhodanese domain. Cysteine 174 serves as the catalytic Cysteine persulfide intermediate.

This sequence belongs to the TrhO family.

The catalysed reaction is uridine(34) in tRNA + AH2 + O2 = 5-hydroxyuridine(34) in tRNA + A + H2O. Catalyzes oxygen-dependent 5-hydroxyuridine (ho5U) modification at position 34 in tRNAs. In Wolbachia pipientis wMel, this protein is tRNA uridine(34) hydroxylase.